Consider the following 263-residue polypeptide: Large ribosomal subunit protein uL10m (263 aa).

The N-terminal 29 residues, 1–29 (MPFSVEVEVFFLLVEDKLGWLPTLQPVRH), are a transit peptide targeting the mitochondrion. Positions 241–263 (QHEGDCATSTEGKPHPPDPAPDS) are disordered.

Belongs to the universal ribosomal protein uL10 family. In terms of assembly, component of the mitochondrial ribosome large subunit (39S) which comprises a 16S rRNA and about 50 distinct proteins.

Its subcellular location is the mitochondrion. The polypeptide is Large ribosomal subunit protein uL10m (Mrpl10) (Rattus norvegicus (Rat)).